The primary structure comprises 498 residues: Death-associated inhibitor of apoptosis 2 (498 aa).

BIR repeat units follow at residues 12–77, 116–180, and 215–280; these read RLAT…SMVL, RLVT…PRVQ, and RLRT…QFVL. Cys-249, Cys-252, His-269, and Cys-276 together coordinate Zn(2+). The RING-type zinc finger occupies 451–486; that stretch reads CKVCLDEEVGVVFLPCGHLATCNQCAPSVANCPMCR.

It belongs to the IAP family. As to quaternary structure, interacts with the caspase Strica. Interacts (via BIR2 domain) with rpr and grim. Interacts (via the BIR2 and BIR3 domains) with hid. Interacts (via BIR3 domain) with Drice. Interacts with Dredd; likely to bind Dredd simultaneously with Fadd to form a trimeric complex. Post-translationally, caspase-dependent cleavage is required for suppression of Drice-mediated cell death. As to expression, expressed in both principal and stellar cells of the Malphigian tubules.

Its subcellular location is the nucleus. The protein localises to the cytoplasm. Its function is as follows. Required for activation of NF-kappaB transcription factors in the immune deficiency (Imd) signaling cascade which is essential for innate immune responses upon infection by Gram-negative bacteria. Promotes cytoplasmic cleavage of Rel and its translocation to the nucleus where it drives expression of antimicrobial peptides. Binds, polyubiquitinates and activates Dredd which is required for Rel-mediated induction of antimicrobial peptides. Anti-apoptotic protein which binds, ubiquitinates and inactivates the effector caspase Drice. Suppresses rpr and hid-dependent cell death in the eye. However, has also been shown to have little, if any, role in the regulation of the canonical caspase-dependent apoptosis pathway. Plays a role in regulating the expression of ion channels. In Drosophila melanogaster (Fruit fly), this protein is Death-associated inhibitor of apoptosis 2 (Diap2).